The following is a 196-amino-acid chain: Type-4 uracil-DNA glycosylase (196 aa).

Cys13 and Cys16 together coordinate [4Fe-4S] cluster. Uracil is bound by residues 40–42 (GEA), Phe54, and Asn80. 2 residues coordinate [4Fe-4S] cluster: Cys84 and Cys100. His162 contacts uracil.

Belongs to the uracil-DNA glycosylase (UDG) superfamily. Type 4 (UDGa) family.

It carries out the reaction Hydrolyzes single-stranded DNA or mismatched double-stranded DNA and polynucleotides, releasing free uracil.. Removes uracil bases that are present in DNA as a result of either deamination of cytosine or misincorporation of dUMP instead of dTMP. Can remove uracil from double-stranded DNA containing either a U/G or U/A base pair as well as from single-stranded DNA. The sequence is that of Type-4 uracil-DNA glycosylase from Pyrobaculum aerophilum (strain ATCC 51768 / DSM 7523 / JCM 9630 / CIP 104966 / NBRC 100827 / IM2).